We begin with the raw amino-acid sequence, 162 residues long: Phosphopantetheine adenylyltransferase (162 aa).

Residue Ser-9 participates in substrate binding. Residues 9–10 and His-17 contribute to the ATP site; that span reads SF. The substrate site is built by Lys-41, Val-77, and Lys-91. Residues 92–94, Glu-102, and 126–132 contribute to the ATP site; these read GLR and YAFLSSS.

It belongs to the bacterial CoaD family. As to quaternary structure, homohexamer. Mg(2+) is required as a cofactor.

The protein localises to the cytoplasm. It carries out the reaction (R)-4'-phosphopantetheine + ATP + H(+) = 3'-dephospho-CoA + diphosphate. It functions in the pathway cofactor biosynthesis; coenzyme A biosynthesis; CoA from (R)-pantothenate: step 4/5. Reversibly transfers an adenylyl group from ATP to 4'-phosphopantetheine, yielding dephospho-CoA (dPCoA) and pyrophosphate. In Frankia alni (strain DSM 45986 / CECT 9034 / ACN14a), this protein is Phosphopantetheine adenylyltransferase.